The following is a 313-amino-acid chain: Apolipoprotein E (313 aa).

An N-terminal signal peptide occupies residues Met-1 to Ala-18. 8 repeat units span residues Val-79–Gly-100, Pro-101–Ala-122, Ser-123–Gly-144, Gln-145–Leu-166, Arg-167–Glu-188, Arg-189–Ala-209, Gly-210–Arg-229, and Gly-230–Glu-251. The interval Val-79–Glu-251 is 8 X 22 AA approximate tandem repeats. Residues His-157 to Arg-167 are LDL and other lipoprotein receptors binding. Leu-161 to Arg-164 is a binding site for heparin. The tract at residues Ala-209–Met-286 is lipid-binding and lipoprotein association. Position 225-232 (His-225–Val-232) interacts with heparin. A homooligomerization region spans residues Ser-262–His-313. Residues Arg-274–Met-286 form a specificity for association with VLDL region.

The protein belongs to the apolipoprotein A1/A4/E family. Homotetramer. May interact with ABCA1; functionally associated with ABCA1 in the biogenesis of HDLs. May interact with APP/A4 amyloid-beta peptide; the interaction is extremely stable in vitro but its physiological significance is unclear. May interact with MAPT. May interact with MAP2. In the cerebrospinal fluid, interacts with secreted SORL1. Interacts with PMEL; this allows the loading of PMEL luminal fragment on ILVs to induce fibril nucleation. In terms of processing, APOE exists as multiple glycosylated and sialylated glycoforms within cells and in plasma. The extent of glycosylation and sialylation are tissue and context specific. Glycated in plasma VLDL. Post-translationally, phosphorylated by FAM20C in the extracellular medium.

Its subcellular location is the secreted. It localises to the extracellular space. It is found in the extracellular matrix. The protein resides in the extracellular vesicle. The protein localises to the endosome. Its subcellular location is the multivesicular body. Its function is as follows. APOE is an apolipoprotein, a protein associating with lipid particles, that mainly functions in lipoprotein-mediated lipid transport between organs via the plasma and interstitial fluids. APOE is a core component of plasma lipoproteins and is involved in their production, conversion and clearance. Apolipoproteins are amphipathic molecules that interact both with lipids of the lipoprotein particle core and the aqueous environment of the plasma. As such, APOE associates with chylomicrons, chylomicron remnants, very low density lipoproteins (VLDL) and intermediate density lipoproteins (IDL) but shows a preferential binding to high-density lipoproteins (HDL). It also binds a wide range of cellular receptors including the LDL receptor/LDLR and the very low-density lipoprotein receptor/VLDLR that mediate the cellular uptake of the APOE-containing lipoprotein particles. Finally, APOE also has a heparin-binding activity and binds heparan-sulfate proteoglycans on the surface of cells, a property that supports the capture and the receptor-mediated uptake of APOE-containing lipoproteins by cells. This Balaenoptera acutorostrata scammoni (North Pacific minke whale) protein is Apolipoprotein E (APOE).